The following is a 90-amino-acid chain: Toxin 3FTx-Psa1 (90 aa).

The N-terminal stretch at 1–21 (MKTLPLVLAVVAFVYLDLAHT) is a signal peptide. 4 disulfide bridges follow: Cys24/Cys43, Cys36/Cys61, Cys65/Cys76, and Cys77/Cys82.

This sequence belongs to the three-finger toxin family. Ancestral subfamily. In terms of tissue distribution, expressed by the venom gland.

Its subcellular location is the secreted. This Psammophis mossambicus (Olive sand snake) protein is Toxin 3FTx-Psa1.